Consider the following 355-residue polypeptide: Heme A synthase (355 aa).

The next 8 helical transmembrane spans lie at L21 to I41, I85 to W102, L136 to S156, L173 to L193, A208 to L228, F264 to L284, A299 to V319, and W322 to L342. H270 provides a ligand contact to heme. H327 contacts heme.

It belongs to the COX15/CtaA family. Type 2 subfamily. In terms of assembly, interacts with CtaB. Heme b is required as a cofactor.

It localises to the cell membrane. The enzyme catalyses Fe(II)-heme o + 2 A + H2O = Fe(II)-heme a + 2 AH2. Its pathway is porphyrin-containing compound metabolism; heme A biosynthesis; heme A from heme O: step 1/1. Functionally, catalyzes the conversion of heme O to heme A by two successive hydroxylations of the methyl group at C8. The first hydroxylation forms heme I, the second hydroxylation results in an unstable dihydroxymethyl group, which spontaneously dehydrates, resulting in the formyl group of heme A. The protein is Heme A synthase of Sphingopyxis alaskensis (strain DSM 13593 / LMG 18877 / RB2256) (Sphingomonas alaskensis).